The sequence spans 369 residues: Chorismate synthase (369 aa).

Residues Arg48 and Arg54 each coordinate NADP(+). FMN-binding positions include 125–127 (RSS), 238–239 (NA), Gly278, 293–297 (KPTSS), and Arg319.

The protein belongs to the chorismate synthase family. As to quaternary structure, homotetramer. FMNH2 is required as a cofactor.

It carries out the reaction 5-O-(1-carboxyvinyl)-3-phosphoshikimate = chorismate + phosphate. It functions in the pathway metabolic intermediate biosynthesis; chorismate biosynthesis; chorismate from D-erythrose 4-phosphate and phosphoenolpyruvate: step 7/7. In terms of biological role, catalyzes the anti-1,4-elimination of the C-3 phosphate and the C-6 proR hydrogen from 5-enolpyruvylshikimate-3-phosphate (EPSP) to yield chorismate, which is the branch point compound that serves as the starting substrate for the three terminal pathways of aromatic amino acid biosynthesis. This reaction introduces a second double bond into the aromatic ring system. This chain is Chorismate synthase, found in Burkholderia pseudomallei (strain 1106a).